The sequence spans 90 residues: PIK3R3 upstream open reading frame protein (90 aa).

The tract at residues 1-63 (MGPSQLVRAP…PASEATNISD (63 aa)) is disordered. Residues 27 to 46 (PRRRCPSMFKCSRRTYRQKP) show a composition bias toward basic residues. The segment covering 50–63 (TATNPASEATNISD) has biased composition (polar residues).

The polypeptide is PIK3R3 upstream open reading frame protein (Mus musculus (Mouse)).